We begin with the raw amino-acid sequence, 192 residues long: Xanthine phosphoribosyltransferase (192 aa).

2 residues coordinate xanthine: Leu20 and Asn27. 128 to 132 (AHGEA) contributes to the 5-phospho-alpha-D-ribose 1-diphosphate binding site. Lys156 contacts xanthine.

The protein belongs to the purine/pyrimidine phosphoribosyltransferase family. Xpt subfamily. In terms of assembly, homodimer.

Its subcellular location is the cytoplasm. It catalyses the reaction XMP + diphosphate = xanthine + 5-phospho-alpha-D-ribose 1-diphosphate. It functions in the pathway purine metabolism; XMP biosynthesis via salvage pathway; XMP from xanthine: step 1/1. In terms of biological role, converts the preformed base xanthine, a product of nucleic acid breakdown, to xanthosine 5'-monophosphate (XMP), so it can be reused for RNA or DNA synthesis. The chain is Xanthine phosphoribosyltransferase from Lactobacillus acidophilus (strain ATCC 700396 / NCK56 / N2 / NCFM).